The chain runs to 206 residues: Large ribosomal subunit protein uL4 (206 aa).

The segment at 63-93 (MYKQKGTGRARHHSARAPQFRGGGKAHGPVV) is disordered. Basic residues predominate over residues 64-77 (YKQKGTGRARHHSA).

The protein belongs to the universal ribosomal protein uL4 family. As to quaternary structure, part of the 50S ribosomal subunit.

Its function is as follows. One of the primary rRNA binding proteins, this protein initially binds near the 5'-end of the 23S rRNA. It is important during the early stages of 50S assembly. It makes multiple contacts with different domains of the 23S rRNA in the assembled 50S subunit and ribosome. Functionally, forms part of the polypeptide exit tunnel. The polypeptide is Large ribosomal subunit protein uL4 (Sinorhizobium fredii (strain NBRC 101917 / NGR234)).